We begin with the raw amino-acid sequence, 338 residues long: Ketol-acid reductoisomerase (NADP(+)) (338 aa).

The 181-residue stretch at 1–181 (MKVFYDKDAD…GGGRAGIIET (181 aa)) folds into the KARI N-terminal Rossmann domain. NADP(+) contacts are provided by residues 24–27 (YGSQ), Arg47, and Ser52. The active site involves His107. Gly133 lines the NADP(+) pocket. Positions 182–327 (NFREETETDL…SKLRAMMPWI (146 aa)) constitute a KARI C-terminal knotted domain. Mg(2+)-binding residues include Asp190, Glu194, Glu226, and Glu230. Ser251 is a substrate binding site.

Belongs to the ketol-acid reductoisomerase family. The cofactor is Mg(2+).

The enzyme catalyses (2R)-2,3-dihydroxy-3-methylbutanoate + NADP(+) = (2S)-2-acetolactate + NADPH + H(+). It catalyses the reaction (2R,3R)-2,3-dihydroxy-3-methylpentanoate + NADP(+) = (S)-2-ethyl-2-hydroxy-3-oxobutanoate + NADPH + H(+). Its pathway is amino-acid biosynthesis; L-isoleucine biosynthesis; L-isoleucine from 2-oxobutanoate: step 2/4. It functions in the pathway amino-acid biosynthesis; L-valine biosynthesis; L-valine from pyruvate: step 2/4. Involved in the biosynthesis of branched-chain amino acids (BCAA). Catalyzes an alkyl-migration followed by a ketol-acid reduction of (S)-2-acetolactate (S2AL) to yield (R)-2,3-dihydroxy-isovalerate. In the isomerase reaction, S2AL is rearranged via a Mg-dependent methyl migration to produce 3-hydroxy-3-methyl-2-ketobutyrate (HMKB). In the reductase reaction, this 2-ketoacid undergoes a metal-dependent reduction by NADPH to yield (R)-2,3-dihydroxy-isovalerate. The sequence is that of Ketol-acid reductoisomerase (NADP(+)) from Burkholderia mallei (strain NCTC 10229).